The primary structure comprises 241 residues: Demethylmenaquinone methyltransferase (241 aa).

S-adenosyl-L-methionine-binding positions include Thr-60, Asp-81, and 106–107 (DA).

The protein belongs to the class I-like SAM-binding methyltransferase superfamily. MenG/UbiE family.

It carries out the reaction a 2-demethylmenaquinol + S-adenosyl-L-methionine = a menaquinol + S-adenosyl-L-homocysteine + H(+). The protein operates within quinol/quinone metabolism; menaquinone biosynthesis; menaquinol from 1,4-dihydroxy-2-naphthoate: step 2/2. Functionally, methyltransferase required for the conversion of demethylmenaquinol (DMKH2) to menaquinol (MKH2). The sequence is that of Demethylmenaquinone methyltransferase from Staphylococcus aureus (strain MRSA252).